Here is a 163-residue protein sequence, read N- to C-terminus: Endoribonuclease YbeY (163 aa).

H121, H125, and H131 together coordinate Zn(2+).

This sequence belongs to the endoribonuclease YbeY family. Requires Zn(2+) as cofactor.

It is found in the cytoplasm. Single strand-specific metallo-endoribonuclease involved in late-stage 70S ribosome quality control and in maturation of the 3' terminus of the 16S rRNA. This Synechococcus sp. (strain JA-2-3B'a(2-13)) (Cyanobacteria bacterium Yellowstone B-Prime) protein is Endoribonuclease YbeY.